The chain runs to 345 residues: MDQGQTLARLLDSYATDPRKRAVAAAVGAIAEASIEISELIGQGALAGITGAAHGASNADGDVQKDLDVRAEAAIVAALKNVPYAALASEEAEALLMGDPQAPISIAYDPLDGSSNIDTNMTVGTIFSIIPNEPGVAPFTAPGSCQLAAGFVVYGPQTSFVLTLGDGVDIFTLDRKDHVYRLIREKVKVAGDTAEYAINASNHRHWEQPVRDFVDECLAGADGPRAKNFNMRWIGSLVAEAYRILTRGGVFLYPADSRPGYGDGRLRLLYETHPMAFVMEQAGGAASTGRERVLDLSAAATSTHQRSPLIMGSSDKVNRIVELHLDPSAASRTAPLFGRRGLFRT.

4 residues coordinate Mg(2+): Glu90, Asp109, Leu111, and Asp112. Substrate contacts are provided by residues 112 to 115 and Asn199; that span reads DGSS. A Mg(2+)-binding site is contributed by Glu271.

It belongs to the FBPase class 1 family. In terms of assembly, homotetramer. Mg(2+) is required as a cofactor.

It localises to the cytoplasm. The catalysed reaction is beta-D-fructose 1,6-bisphosphate + H2O = beta-D-fructose 6-phosphate + phosphate. It functions in the pathway carbohydrate biosynthesis; Calvin cycle. This chain is Fructose-1,6-bisphosphatase class 1, found in Rhodopseudomonas palustris (strain BisB5).